The following is a 213-amino-acid chain: Pyridoxine/pyridoxamine 5'-phosphate oxidase (213 aa).

Residues 8 to 11 (RQEY) and Lys66 each bind substrate. FMN is bound by residues 61 to 66 (RTVLLK), 76 to 77 (YT), Arg82, Lys83, and Gln105. Substrate is bound by residues Tyr123, Arg127, and Ser131. Residues 140-141 (QS) and Trp185 contribute to the FMN site. 191–193 (RLH) is a substrate binding site. Arg195 is an FMN binding site.

The protein belongs to the pyridoxamine 5'-phosphate oxidase family. In terms of assembly, homodimer. FMN serves as cofactor.

It catalyses the reaction pyridoxamine 5'-phosphate + O2 + H2O = pyridoxal 5'-phosphate + H2O2 + NH4(+). It carries out the reaction pyridoxine 5'-phosphate + O2 = pyridoxal 5'-phosphate + H2O2. The protein operates within cofactor metabolism; pyridoxal 5'-phosphate salvage; pyridoxal 5'-phosphate from pyridoxamine 5'-phosphate: step 1/1. It functions in the pathway cofactor metabolism; pyridoxal 5'-phosphate salvage; pyridoxal 5'-phosphate from pyridoxine 5'-phosphate: step 1/1. Functionally, catalyzes the oxidation of either pyridoxine 5'-phosphate (PNP) or pyridoxamine 5'-phosphate (PMP) into pyridoxal 5'-phosphate (PLP). The protein is Pyridoxine/pyridoxamine 5'-phosphate oxidase of Bacteroides thetaiotaomicron (strain ATCC 29148 / DSM 2079 / JCM 5827 / CCUG 10774 / NCTC 10582 / VPI-5482 / E50).